The chain runs to 214 residues: A-type ATP synthase subunit D (214 aa).

The protein belongs to the V-ATPase D subunit family. As to quaternary structure, has multiple subunits with at least A(3), B(3), C, D, E, F, H, I and proteolipid K(x).

It localises to the cell membrane. In terms of biological role, component of the A-type ATP synthase that produces ATP from ADP in the presence of a proton gradient across the membrane. The chain is A-type ATP synthase subunit D from Pyrococcus horikoshii (strain ATCC 700860 / DSM 12428 / JCM 9974 / NBRC 100139 / OT-3).